The chain runs to 1021 residues: Transmembrane protein 132A (1021 aa).

A signal peptide spans 1-32; it reads MTERAAAAPRGPYGAWLCLLVALALEVVRVGS. Topologically, residues 33 to 848 are extracellular; it reads NQNTLDPIYL…VTDLELGMYA (816 aa). A disordered region spans residues 207–226; it reads PAGEGPGGCGPGTEEEPKEQ. A glycan (N-linked (GlcNAc...) asparagine) is linked at asparagine 276. The segment at 606–913 is binds to HSPA5/GRP78; that stretch reads IEVRSPLSDS…QLDRCSSSSP (308 aa). The segment at 666 to 1021 is confers cellular localization similar to full-length form; sequence LPAPKQEVAL…NYMERIRGSS (356 aa). The interval 793–835 is disordered; sequence AGDMGSHVGPGIRGKFERAEEEAGKEENEAKEEEEDEEEMVPA. Positions 806 to 820 are enriched in basic and acidic residues; sequence GKFERAEEEAGKEEN. The segment covering 821–832 has biased composition (acidic residues); the sequence is EAKEEEEDEEEM. Residues 849 to 869 traverse the membrane as a helical segment; the sequence is LLGIFCLAFLIFLVNGVVFVL. The Cytoplasmic portion of the chain corresponds to 870 to 1021; sequence RYQRKEPPDS…NYMERIRGSS (152 aa). Positions 903-955 are disordered; it reads RQLDRCSSSSPPKGEGGCPCESGAGGDTSTVAPSASESPAGSTSTLARKEAGG. Positions 929–948 are enriched in polar residues; sequence DTSTVAPSASESPAGSTSTL.

The protein belongs to the TMEM132 family. As to quaternary structure, interacts with HSPA5/GRP78. As to expression, expressed in the brain in neuronal cells of the hypothalamus, thalamus, cerebral cortex, amygdala, and cerebellum.

The protein resides in the golgi apparatus membrane. It is found in the endoplasmic reticulum membrane. In terms of biological role, may play a role in embryonic and postnatal development of the brain. Increased resistance to cell death induced by serum starvation in cultured cells. Regulates cAMP-induced GFAP gene expression via STAT3 phosphorylation. The chain is Transmembrane protein 132A (Tmem132a) from Rattus norvegicus (Rat).